We begin with the raw amino-acid sequence, 188 residues long: MKTAQEFRAGQVANINGAPWVIQKAEFNKSGRNAAVVKMKLKNLLTGAGTETVFKADDKLEPIILDRKEVTYSYFADPLYVFMDSEFNQYEIEKDDLEGVLTFIEDGMTDICEAVFYNDKVISVELPTTIVRQIAYTEPAVRGDTSGKVMKTARLNNGAELQVSAFCEIGDSIEIDTRTGEYKSRVKA.

This sequence belongs to the elongation factor P family.

The protein localises to the cytoplasm. It functions in the pathway protein biosynthesis; polypeptide chain elongation. In terms of biological role, involved in peptide bond synthesis. Stimulates efficient translation and peptide-bond synthesis on native or reconstituted 70S ribosomes in vitro. Probably functions indirectly by altering the affinity of the ribosome for aminoacyl-tRNA, thus increasing their reactivity as acceptors for peptidyl transferase. This Pseudomonas aeruginosa (strain LESB58) protein is Elongation factor P.